A 347-amino-acid polypeptide reads, in one-letter code: 2-hydroxyacid dehydrogenase A (347 aa).

NAD(+)-binding positions include 157–158 (RI), Asp177, 234–236 (TSR), and Asp260. Arg236 is a catalytic residue. The active site involves Glu265.

Belongs to the D-isomer specific 2-hydroxyacid dehydrogenase family.

The catalysed reaction is a (2R)-2-hydroxycarboxylate + NADP(+) = a 2-oxocarboxylate + NADPH + H(+). 2-hydroxyacid dehydrogenase that is capable to reduce pyruvate, hydroxypyruvate and glyoxylate in a NADPH- or NADH-dependent manner. In contrast to 2-HadhD/morA, does not recognize 4-methyl-2-oxopentanoate (MOA) as a substrate. This chain is 2-hydroxyacid dehydrogenase A, found in Aspergillus oryzae (strain ATCC 42149 / RIB 40) (Yellow koji mold).